Reading from the N-terminus, the 340-residue chain is Ribonucleoside-diphosphate reductase small subunit (340 aa).

A helical membrane pass occupies residues 180–200; the sequence is FILMILIEGIFFAASFAAIAY.

This sequence belongs to the ribonucleoside diphosphate reductase small chain family. In terms of assembly, heterotetramer composed of a homodimer of the large subunit (R1) and a homodimer of the small subunit (R2). Larger multisubunit protein complex are also active, composed of (R1)n(R2)n. Fe cation is required as a cofactor.

The protein localises to the host membrane. It carries out the reaction a 2'-deoxyribonucleoside 5'-diphosphate + [thioredoxin]-disulfide + H2O = a ribonucleoside 5'-diphosphate + [thioredoxin]-dithiol. Its function is as follows. Ribonucleoside-diphosphate reductase holoenzyme provides the precursors necessary for viral DNA synthesis. Allows virus growth in non-dividing cells, as well as reactivation from latency in infected hosts. Catalyzes the biosynthesis of deoxyribonucleotides from the corresponding ribonucleotides. The chain is Ribonucleoside-diphosphate reductase small subunit from Human herpesvirus 1 (strain 17) (HHV-1).